We begin with the raw amino-acid sequence, 197 residues long: Xanthine phosphoribosyltransferase (197 aa).

Xanthine-binding residues include Leu-20 and Asn-27. Position 128–132 (128–132) interacts with 5-phospho-alpha-D-ribose 1-diphosphate; it reads ANGQA. Residue Lys-156 coordinates xanthine.

Belongs to the purine/pyrimidine phosphoribosyltransferase family. Xpt subfamily. As to quaternary structure, homodimer.

The protein resides in the cytoplasm. It carries out the reaction XMP + diphosphate = xanthine + 5-phospho-alpha-D-ribose 1-diphosphate. It functions in the pathway purine metabolism; XMP biosynthesis via salvage pathway; XMP from xanthine: step 1/1. Converts the preformed base xanthine, a product of nucleic acid breakdown, to xanthosine 5'-monophosphate (XMP), so it can be reused for RNA or DNA synthesis. This chain is Xanthine phosphoribosyltransferase, found in Bacillus mycoides (strain KBAB4) (Bacillus weihenstephanensis).